The chain runs to 880 residues: Valine--tRNA ligase (880 aa).

A 'HIGH' region motif is present at residues 46 to 56 (PNVTGKLHLGH). The short motif at 520 to 524 (KMSKS) is the 'KMSKS' region element. Lys523 contacts ATP. Positions 808 to 880 (LAGLINIEEE…KARIAELKEN (73 aa)) form a coiled coil.

The protein belongs to the class-I aminoacyl-tRNA synthetase family. ValS type 1 subfamily. As to quaternary structure, monomer.

Its subcellular location is the cytoplasm. It catalyses the reaction tRNA(Val) + L-valine + ATP = L-valyl-tRNA(Val) + AMP + diphosphate. In terms of biological role, catalyzes the attachment of valine to tRNA(Val). As ValRS can inadvertently accommodate and process structurally similar amino acids such as threonine, to avoid such errors, it has a 'posttransfer' editing activity that hydrolyzes mischarged Thr-tRNA(Val) in a tRNA-dependent manner. This is Valine--tRNA ligase from Lactococcus lactis subsp. lactis (strain IL1403) (Streptococcus lactis).